The following is a 619-amino-acid chain: Pentatricopeptide repeat-containing protein At1g68980, mitochondrial (619 aa).

Residues 1 to 100 (MLRKTLTLIS…RAFVSTTYVI (100 aa)) constitute a mitochondrion transit peptide. PPR repeat units lie at residues 186 to 221 (DLVA…GVKP), 222 to 256 (DELS…GFAS), 257 to 292 (RRIL…GEAS), 295 to 329 (SEET…ESMS), 366 to 400 (GIGV…GLQL), 401 to 435 (DVET…RVAD), 436 to 466 (LKRC…VMED), 472 to 506 (KSHD…QYEP), 507 to 541 (NNQT…KAKL), and 542 to 576 (EHAL…KIFV).

This sequence belongs to the PPR family. P subfamily.

It localises to the mitochondrion. This is Pentatricopeptide repeat-containing protein At1g68980, mitochondrial from Arabidopsis thaliana (Mouse-ear cress).